We begin with the raw amino-acid sequence, 297 residues long: MITIEISINLELIISFYLLFILGANNVANAIGTAYASRATTYRNLLILFSISVIIGSLFAKNVGSTVNSLSSDALTALIISALVMTLSTYKKVPISLHTVIICSLIGLNFNSSNLYVFGEILLSWILSPIIAVVIAYILYSAYEKIDISILKKITMIRYFLLISAAVVAFNLGSNDLPTVLGTFTTSQIIYIIGAIFLCLGAYLYGNRVSETLSMITNLSVSSAFIAQLSGGLAVTIFTALGMPVSTTQAIVGGILGVGLTKGIKTVRWKVLKNIIFWWVVAPIIALIIGFIINRMI.

9 helical membrane-spanning segments follow: residues 2–22 (ITIE…LFIL), 45–65 (LLIL…NVGS), 67–87 (VNSL…VMTL), 99–119 (TVII…YVFG), 121–141 (ILLS…ILYS), 154–174 (ITMI…NLGS), 180–200 (VLGT…FLCL), 225–245 (FIAQ…GMPV), and 274–294 (NIIF…FIIN).

This sequence belongs to the inorganic phosphate transporter (PiT) (TC 2.A.20) family.

It is found in the cell membrane. Functionally, potential transporter for phosphate. In Methanocaldococcus jannaschii (strain ATCC 43067 / DSM 2661 / JAL-1 / JCM 10045 / NBRC 100440) (Methanococcus jannaschii), this protein is Putative phosphate permease MJ0630.